The following is a 530-amino-acid chain: Bifunctional purine biosynthesis protein PurH (530 aa).

Residues 1 to 148 (MNNARPIRRA…KNHKDVTIVV (148 aa)) enclose the MGS-like domain.

The protein belongs to the PurH family.

It catalyses the reaction (6R)-10-formyltetrahydrofolate + 5-amino-1-(5-phospho-beta-D-ribosyl)imidazole-4-carboxamide = 5-formamido-1-(5-phospho-D-ribosyl)imidazole-4-carboxamide + (6S)-5,6,7,8-tetrahydrofolate. The enzyme catalyses IMP + H2O = 5-formamido-1-(5-phospho-D-ribosyl)imidazole-4-carboxamide. It participates in purine metabolism; IMP biosynthesis via de novo pathway; 5-formamido-1-(5-phospho-D-ribosyl)imidazole-4-carboxamide from 5-amino-1-(5-phospho-D-ribosyl)imidazole-4-carboxamide (10-formyl THF route): step 1/1. It functions in the pathway purine metabolism; IMP biosynthesis via de novo pathway; IMP from 5-formamido-1-(5-phospho-D-ribosyl)imidazole-4-carboxamide: step 1/1. The chain is Bifunctional purine biosynthesis protein PurH from Vibrio parahaemolyticus serotype O3:K6 (strain RIMD 2210633).